We begin with the raw amino-acid sequence, 280 residues long: Shikimate kinase (280 aa).

86–96 (PPGVGLKGSAA) is a binding site for ATP.

It belongs to the GHMP kinase family. Archaeal shikimate kinase subfamily.

Its subcellular location is the cytoplasm. The enzyme catalyses shikimate + ATP = 3-phosphoshikimate + ADP + H(+). It participates in metabolic intermediate biosynthesis; chorismate biosynthesis; chorismate from D-erythrose 4-phosphate and phosphoenolpyruvate: step 5/7. The protein is Shikimate kinase (aroK) of Aeropyrum pernix (strain ATCC 700893 / DSM 11879 / JCM 9820 / NBRC 100138 / K1).